Consider the following 209-residue polypeptide: FK506-binding protein 2B (209 aa).

The N-terminal stretch at 1 to 19 is a signal peptide; that stretch reads MRFSLLALLGTIVATSVSA. The PPIase FKBP-type domain maps to 47-136; sequence GDELSMHYTG…VFEVELLEIK (90 aa). The chain crosses the membrane as a helical span at residues 157 to 177; that stretch reads FTSPSFLVSTGIIVALFLIVF. The stretch at 178 to 207 forms a coiled coil; that stretch reads KMAKKQDIAEANEKAAAATAEASTEKKEEK. The disordered stretch occupies residues 190–209; that stretch reads EKAAAATAEASTEKKEEKKE. Residues 200 to 209 are compositionally biased toward basic and acidic residues; it reads STEKKEEKKE.

The protein belongs to the FKBP-type PPIase family. FKBP2 subfamily.

The protein localises to the membrane. The enzyme catalyses [protein]-peptidylproline (omega=180) = [protein]-peptidylproline (omega=0). Its activity is regulated as follows. Inhibited by both FK506 and rapamycin. Functionally, PPIases accelerate the folding of proteins. It catalyzes the cis-trans isomerization of proline imidic peptide bonds in oligopeptides. This is FK506-binding protein 2B (FKBP3) from Rhizopus delemar (strain RA 99-880 / ATCC MYA-4621 / FGSC 9543 / NRRL 43880) (Mucormycosis agent).